The sequence spans 153 residues: 3-hydroxyacyl-[acyl-carrier-protein] dehydratase FabZ (153 aa).

The active site involves histidine 54.

This sequence belongs to the thioester dehydratase family. FabZ subfamily.

It is found in the cytoplasm. The enzyme catalyses a (3R)-hydroxyacyl-[ACP] = a (2E)-enoyl-[ACP] + H2O. In terms of biological role, involved in unsaturated fatty acids biosynthesis. Catalyzes the dehydration of short chain beta-hydroxyacyl-ACPs and long chain saturated and unsaturated beta-hydroxyacyl-ACPs. This is 3-hydroxyacyl-[acyl-carrier-protein] dehydratase FabZ from Chlamydia muridarum (strain MoPn / Nigg).